The following is a 216-amino-acid chain: Ribose-5-phosphate isomerase A (216 aa).

Residues 26–29 (TGST), 79–82 (DGAD), and 92–95 (KGGG) each bind substrate. Catalysis depends on Glu-101, which acts as the Proton acceptor. Position 119 (Lys-119) interacts with substrate.

It belongs to the ribose 5-phosphate isomerase family. Homodimer.

It catalyses the reaction aldehydo-D-ribose 5-phosphate = D-ribulose 5-phosphate. Its pathway is carbohydrate degradation; pentose phosphate pathway; D-ribose 5-phosphate from D-ribulose 5-phosphate (non-oxidative stage): step 1/1. In terms of biological role, catalyzes the reversible conversion of ribose-5-phosphate to ribulose 5-phosphate. This is Ribose-5-phosphate isomerase A from Legionella pneumophila (strain Corby).